The sequence spans 370 residues: tRNA-specific 2-thiouridylase MnmA (370 aa).

ATP contacts are provided by residues 19–26 (AMSGGVDS) and leucine 45. Cysteine 113 (nucleophile) is an active-site residue. Cysteine 113 and cysteine 209 form a disulfide bridge. Residue glycine 137 coordinates ATP. The interval 159–161 (RDQ) is interaction with tRNA. The active-site Cysteine persulfide intermediate is the cysteine 209.

The protein belongs to the MnmA/TRMU family.

Its subcellular location is the cytoplasm. It catalyses the reaction S-sulfanyl-L-cysteinyl-[protein] + uridine(34) in tRNA + AH2 + ATP = 2-thiouridine(34) in tRNA + L-cysteinyl-[protein] + A + AMP + diphosphate + H(+). Functionally, catalyzes the 2-thiolation of uridine at the wobble position (U34) of tRNA, leading to the formation of s(2)U34. The sequence is that of tRNA-specific 2-thiouridylase MnmA from Zymomonas mobilis subsp. mobilis (strain ATCC 31821 / ZM4 / CP4).